A 261-amino-acid polypeptide reads, in one-letter code: TM2 domain-containing protein 3 (261 aa).

The signal sequence occupies residues 1–44 (MEAAAEPLRSVRHLSRVLLFLSQCYILSGDGSLNLEHSQPLAQA). At 45–193 (IKDPGPTRTF…RTFPKLLYCN (149 aa)) the chain is on the extracellular side. N-linked (GlcNAc...) asparagine glycosylation is found at Asn101, Asn136, Asn154, Asn171, Asn183, and Asn193. Residues 194–214 (WTGGYKWSTALALSITLGGFG) traverse the membrane as a helical segment. One can recognise a TM2 domain in the interval 197 to 244 (GYKWSTALALSITLGGFGADRFYLGQWREGLGKLFSFGGLGIWTLIDV). Topologically, residues 215 to 229 (ADRFYLGQWREGLGK) are cytoplasmic. A helical membrane pass occupies residues 230 to 250 (LFSFGGLGIWTLIDVLLIGVG). Residues 251-261 (YVGPADGSLYI) are Extracellular-facing.

This sequence belongs to the TM2 family.

The protein resides in the membrane. This is TM2 domain-containing protein 3 (Tm2d3) from Mus musculus (Mouse).